A 444-amino-acid chain; its full sequence is Trigger factor (444 aa).

Positions 185-270 (GDKLIIDFEG…VNEIQIAKDF (86 aa)) constitute a PPIase FKBP-type domain.

The protein belongs to the FKBP-type PPIase family. Tig subfamily.

It is found in the cytoplasm. The catalysed reaction is [protein]-peptidylproline (omega=180) = [protein]-peptidylproline (omega=0). In terms of biological role, involved in protein export. Acts as a chaperone by maintaining the newly synthesized protein in an open conformation. Functions as a peptidyl-prolyl cis-trans isomerase. The polypeptide is Trigger factor (Wolbachia pipientis wMel).